Consider the following 420-residue polypeptide: ATP phosphoribosyltransferase regulatory subunit (420 aa).

It belongs to the class-II aminoacyl-tRNA synthetase family. HisZ subfamily. As to quaternary structure, heteromultimer composed of HisG and HisZ subunits.

Its subcellular location is the cytoplasm. It participates in amino-acid biosynthesis; L-histidine biosynthesis; L-histidine from 5-phospho-alpha-D-ribose 1-diphosphate: step 1/9. Required for the first step of histidine biosynthesis. May allow the feedback regulation of ATP phosphoribosyltransferase activity by histidine. This chain is ATP phosphoribosyltransferase regulatory subunit, found in Bacillus cereus (strain AH187).